Consider the following 363-residue polypeptide: uncharacterized protein (363 aa).

Residues 109 to 329 (RAALRELRSR…VEELQAQTRE (221 aa)) adopt a coiled-coil conformation.

This is an uncharacterized protein from Homo sapiens (Human).